The primary structure comprises 87 residues: MVNMKASMFLTSAGLVLLFVVCYASESEEKEFPKEMLSSIFAVDNDFKQEERDCAGHMRECKEKLCCSGYVCSSRWKWCVLPAPWRR.

Residues 1 to 24 (MVNMKASMFLTSAGLVLLFVVCYA) form the signal peptide. Positions 25 to 52 (SESEEKEFPKEMLSSIFAVDNDFKQEER) are excised as a propeptide. 3 disulfides stabilise this stretch: C54–C67, C61–C72, and C66–C79.

This sequence belongs to the neurotoxin 10 (Hwtx-1) family. 51 (Hntx-8) subfamily. Hntx-8 sub-subfamily. As to expression, expressed by the venom gland.

Its subcellular location is the secreted. Ion channel inhibitor. The protein is U3-theraphotoxin-Hhn1f of Cyriopagopus hainanus (Chinese bird spider).